A 370-amino-acid polypeptide reads, in one-letter code: 3-dehydroquinate synthase (370 aa).

NAD(+) is bound by residues 112–116 (GVVGD), 136–137 (TS), Lys149, Lys158, and 176–179 (TLRT). Positions 191, 254, and 276 each coordinate Zn(2+).

It belongs to the sugar phosphate cyclases superfamily. Dehydroquinate synthase family. Requires NAD(+) as cofactor. Co(2+) is required as a cofactor. It depends on Zn(2+) as a cofactor.

It localises to the cytoplasm. It carries out the reaction 7-phospho-2-dehydro-3-deoxy-D-arabino-heptonate = 3-dehydroquinate + phosphate. Its pathway is metabolic intermediate biosynthesis; chorismate biosynthesis; chorismate from D-erythrose 4-phosphate and phosphoenolpyruvate: step 2/7. In terms of biological role, catalyzes the conversion of 3-deoxy-D-arabino-heptulosonate 7-phosphate (DAHP) to dehydroquinate (DHQ). The sequence is that of 3-dehydroquinate synthase from Xanthomonas axonopodis pv. citri (strain 306).